A 939-amino-acid chain; its full sequence is Zinc finger RNA-binding protein 2 (939 aa).

Disordered stretches follow at residues 1–72 (MATS…AYGS), 116–185 (GRMT…IVTS), 217–264 (FYPP…PKAG), 289–314 (HLGG…SPRG), 360–389 (LEPA…ASSR), 401–449 (ALCE…DAQP), 545–590 (RLEE…SSDD), and 906–939 (RLGA…EGLV). Polar residues-rich tracts occupy residues 137 to 147 (PHGSHSHAQPP) and 157 to 184 (QPAS…SIVT). Residues 217 to 239 (FYPPAQPPPPPGPPQQLPPPPAP) are compositionally biased toward pro residues. Residues 516-549 (KVLEERMRKQRHLAEERLEQLRRWHAERRRLEEE) are a coiled coil. Residues 570–935 (RPESPASAPL…GEKKRGRRGG (366 aa)) enclose the DZF domain. Residues 906–916 (RLGARFRKRQR) are compositionally biased toward basic residues.

In Homo sapiens (Human), this protein is Zinc finger RNA-binding protein 2 (ZFR2).